Here is a 171-residue protein sequence, read N- to C-terminus: UPF0398 protein SPy_1647/M5005_Spy1353 (171 aa).

Belongs to the UPF0398 family.

The chain is UPF0398 protein SPy_1647/M5005_Spy1353 from Streptococcus pyogenes serotype M1.